The chain runs to 342 residues: Dihydroorotate dehydrogenase (quinone) (342 aa).

FMN contacts are provided by residues alanine 61–lysine 65 and threonine 85. A substrate-binding site is contributed by lysine 65. A substrate-binding site is contributed by asparagine 110–phenylalanine 114. Residues asparagine 138 and asparagine 171 each coordinate FMN. Asparagine 171 is a binding site for substrate. Serine 174 (nucleophile) is an active-site residue. Asparagine 176 contacts substrate. Lysine 216 and threonine 244 together coordinate FMN. Asparagine 245–threonine 246 is a binding site for substrate. FMN-binding positions include glycine 267, glycine 296, and tyrosine 317–serine 318.

The protein belongs to the dihydroorotate dehydrogenase family. Type 2 subfamily. As to quaternary structure, monomer. FMN serves as cofactor.

It localises to the cell membrane. The catalysed reaction is (S)-dihydroorotate + a quinone = orotate + a quinol. Its pathway is pyrimidine metabolism; UMP biosynthesis via de novo pathway; orotate from (S)-dihydroorotate (quinone route): step 1/1. Catalyzes the conversion of dihydroorotate to orotate with quinone as electron acceptor. The protein is Dihydroorotate dehydrogenase (quinone) of Pseudomonas aeruginosa (strain UCBPP-PA14).